We begin with the raw amino-acid sequence, 230 residues long: MIKAILTDIEGTTTPISFVKDVLFPYSYEKIEEFVKNNLQNPQVQKIIEDVKKEINKSDASLEEVIENLKSWIVEDKKITPLKELQGLIWEEGYKSGKLQGFVYPDAYNKLKEWFDSGIKIFIYSSGSVKAQKLLFSNTNYGDLNYLFSGYFDTNIGNKKDKQSYVKIAKEIGFSPSEILFLSDNPDEIIAAASAGYNVIRLVRPLDADHIDNFPYKQVESFDEIEIGRV.

Belongs to the HAD-like hydrolase superfamily. MasA/MtnC family. Monomer. Mg(2+) is required as a cofactor.

The catalysed reaction is 5-methylsulfanyl-2,3-dioxopentyl phosphate + H2O = 1,2-dihydroxy-5-(methylsulfanyl)pent-1-en-3-one + phosphate. Its pathway is amino-acid biosynthesis; L-methionine biosynthesis via salvage pathway; L-methionine from S-methyl-5-thio-alpha-D-ribose 1-phosphate: step 3/6. It participates in amino-acid biosynthesis; L-methionine biosynthesis via salvage pathway; L-methionine from S-methyl-5-thio-alpha-D-ribose 1-phosphate: step 4/6. Its function is as follows. Bifunctional enzyme that catalyzes the enolization of 2,3-diketo-5-methylthiopentyl-1-phosphate (DK-MTP-1-P) into the intermediate 2-hydroxy-3-keto-5-methylthiopentenyl-1-phosphate (HK-MTPenyl-1-P), which is then dephosphorylated to form the acireductone 1,2-dihydroxy-3-keto-5-methylthiopentene (DHK-MTPene). This Sulfurihydrogenibium sp. (strain YO3AOP1) protein is Enolase-phosphatase E1.